We begin with the raw amino-acid sequence, 134 residues long: Cytochrome c-550 (134 aa).

Glutamine 1 carries the post-translational modification Pyrrolidone carboxylic acid. 4 residues coordinate heme c: cysteine 15, cysteine 18, histidine 19, and methionine 100.

Binds 1 heme c group covalently per subunit.

In terms of biological role, electron donor for nitrous-oxide reductase. In Paracoccus pantotrophus (Thiosphaera pantotropha), this protein is Cytochrome c-550.